Reading from the N-terminus, the 582-residue chain is Hydrogen peroxide stress regulator 1 (582 aa).

Disordered stretches follow at residues 24–55 (SPFA…HNSS), 107–154 (YPSA…GISK), 347–366 (TSYN…SGET), and 375–422 (NTSG…GGKS). Residues 107 to 125 (YPSASFSTSQHPSQVYNDG) are compositionally biased toward polar residues. Residues 126–143 (STLNSNNTTQQLNNNNGF) are compositionally biased toward low complexity. The segment covering 375–392 (NTSGRSPNSMEATEQIGT) has biased composition (polar residues). A C2H2-type 1 zinc finger spans residues 423-446 (FVCPECSKKFKRSEHLRRHIRSLH). The segment at 452–473 (FVCICGKRFSRRDNLRQHERLH) adopts a C2H2-type 2; atypical zinc-finger fold.

Its subcellular location is the nucleus. In terms of biological role, transcription factor that globally supports gene expression in response to hydrogen peroxide. The protein is Hydrogen peroxide stress regulator 1 (hsr1) of Schizosaccharomyces pombe (strain 972 / ATCC 24843) (Fission yeast).